We begin with the raw amino-acid sequence, 291 residues long: MSEKLQKVLARAGHGSRREIESIIEAGRVSVDGKIAKLGDRVEITPGLKIRIDGHLISVRESAEQICRVLAYYKPEGELCTRNDPEGRPTVFDRLPKLRGARWIAVGRLDVNTCGLLLFTTDGELANRLMHPSREVEREYAVRVFGQVDDAKLRDLSRGVQLEDGPAAFKTIKFSGGEGINQWYNVTLTEGRNREVRRLWEAVGVQVSRLIRVRYGDIPLPKGLPRGGWTELDLAQTNYLRELVELPPETSSKVAVEKDRRRMKANQIRRAVKRHSQVSGGRRSGGRNNNG.

The 73-residue stretch at 3–75 (EKLQKVLARA…ICRVLAYYKP (73 aa)) folds into the S4 RNA-binding domain. Residue Asp-110 is the Nucleophile of the active site. Residues 256-291 (VEKDRRRMKANQIRRAVKRHSQVSGGRRSGGRNNNG) form a disordered region.

The protein belongs to the pseudouridine synthase RsuA family.

It catalyses the reaction uridine(2605) in 23S rRNA = pseudouridine(2605) in 23S rRNA. Its function is as follows. Responsible for synthesis of pseudouridine from uracil-2605 in 23S ribosomal RNA. This is Ribosomal large subunit pseudouridine synthase B (rluB) from Escherichia coli O6:H1 (strain CFT073 / ATCC 700928 / UPEC).